A 309-amino-acid chain; its full sequence is Dicarboxylate carrier UCP2 (309 aa).

The Mitochondrial intermembrane segment spans residues 1-16 (MVGFKATDVPPTATVK). 3 Solcar repeats span residues 11–106 (PTAT…VKQF), 114–203 (AGIG…IKDT), and 212–297 (DDLP…LKRA). The tract at residues 16–63 (KFLGAGTAACIADLITFPLDTAKVRLQIQGERQGPMQAAASAQYRGVL) is important for interaction with long-chain fatty acids. The chain crosses the membrane as a helical span at residues 17 to 40 (FLGAGTAACIADLITFPLDTAKVR). Residues 41 to 77 (LQIQGERQGPMQAAASAQYRGVLGTILTMVRTEGPRS) lie on the Mitochondrial matrix side of the membrane. Residues 78-103 (LYSGLVAGLQRQMSFASVRIGLYDSV) form a helical membrane-spanning segment. The Mitochondrial intermembrane segment spans residues 104–119 (KQFYTKGSEHAGIGSR). The chain crosses the membrane as a helical span at residues 120–145 (LLAGSTTGALAVAVAQPTDVVKVRFQ). Over 146–173 (AQARAGAGRRYQSTVEAYKTIAREEGFR) the chain is Mitochondrial matrix. Residues 174 to 199 (GLWKGTSPNVARNAIVNCAELVTYDL) traverse the membrane as a helical segment. Residues 200 to 217 (IKDTLLKAHLMTDDLPCH) lie on the Mitochondrial intermembrane side of the membrane. Residues 218-242 (FTSAFGAGFCTTVIASPVDVVKTRY) traverse the membrane as a helical segment. Residues 243 to 268 (MNSALGQYSSAGHCALTMLQKEGPQA) lie on the Mitochondrial matrix side of the membrane. A helical membrane pass occupies residues 269-294 (FYKGFMPSFLRLGSWNVVMFVTYEQL). The tract at residues 278–285 (LRLGSWNV) is important for interaction with long-chain fatty acids. Topologically, residues 295–309 (KRALMAARASREAPF) are mitochondrial intermembrane.

It belongs to the mitochondrial carrier (TC 2.A.29) family. As to quaternary structure, homotetramer. Adopts an asymmetrical dimer of dimers functional form. Interacts with MICU1 (when methylated); leading to decrease the calcium sensitivity of MICU1.

It is found in the mitochondrion inner membrane. It catalyses the reaction L-aspartate(out) + phosphate(in) + H(+)(in) = L-aspartate(in) + phosphate(out) + H(+)(out). The enzyme catalyses oxaloacetate(out) + phosphate(in) + H(+)(in) = oxaloacetate(in) + phosphate(out) + H(+)(out). The catalysed reaction is (S)-malate(out) + phosphate(in) + H(+)(in) = (S)-malate(in) + phosphate(out) + H(+)(out). It carries out the reaction malonate(out) + phosphate(in) + H(+)(in) = malonate(in) + phosphate(out) + H(+)(out). It catalyses the reaction sulfate(out) + phosphate(in) + H(+)(in) = sulfate(in) + phosphate(out) + H(+)(out). The enzyme catalyses (S)-malate(out) = (S)-malate(in). The catalysed reaction is L-aspartate(out) = L-aspartate(in). It carries out the reaction phosphate(in) = phosphate(out). It catalyses the reaction chloride(in) = chloride(out). The enzyme catalyses H(+)(in) = H(+)(out). The catalysed reaction is a long-chain fatty acid(out) = a long-chain fatty acid(in). Antiporter that exports dicarboxylate intermediates of the Krebs cycle in exchange for phosphate plus a proton across the inner membrane of mitochondria, a process driven by mitochondrial motive force with an overall impact on glycolysis, glutaminolysis and glutathione-dependent redox balance. Continuous export of oxaloacetate and related four-carbon dicarboxylates from mitochondrial matrix into the cytosol negatively regulates the oxidation of acetyl-CoA substrates via the Krebs cycle lowering the ATP/ADP ratio and reactive oxygen species (ROS) production. May mediate inducible proton entry into the mitochondrial matrix affecting ATP turnover as a protection mechanism against oxidative stress. The proton currents are most likely associated with fatty acid flipping across the inner membrane of mitochondria in a metabolic process regulated by free fatty acids and purine nucleotides. Regulates the use of glucose as a source of energy. Required for glucose-induced DRP1-dependent mitochondrial fission and neuron activation in the ventromedial nucleus of the hypothalamus (VMH). This mitochondrial adaptation mechanism modulates the VMH pool of glucose-excited neurons with an impact on systemic glucose homeostasis. Regulates ROS levels and metabolic reprogramming of macrophages during the resolution phase of inflammation. Attenuates ROS production in response to IL33 to preserve the integrity of the Krebs cycle required for persistent production of itaconate and subsequent GATA3-dependent differentiation of inflammation-resolving alternatively activated macrophages. Can unidirectionally transport anions including L-malate, L-aspartate, phosphate and chloride ions. Does not mediate adaptive thermogenesis. The polypeptide is Dicarboxylate carrier UCP2 (UCP2) (Bos taurus (Bovine)).